The chain runs to 388 residues: MNKQIFVLYFNIFLIFLGIGLVIPVLPVYLKDLGLTGSDLGLLVAAFALSQMIISPFGGTLADKLGKKLIICIGLILFSVSEFMFAVGHNFSVLMLSRVIGGMSAGMVMPGVTGLIADISPSHQKAKNFGYMSAIINSGFILGPGIGGFMAEVSHRMPFYFAGALGILAFIMSIVLIHDPKKSTTSGFQKLEPQLLTKINWKVFITPVILTLVLSFGLSAFETLYSLYTADKVNYSPKDISIAITGGGIFGALFQIYFFDKFMKYFSELTFIAWSLLYSVVVLILLVFANGYWSIMLISFVVFIGFDMIRPAITNYFSNIAGERQGFAGGLNSTFTSMGNFIGPLIAGALFDVHIEAPIYMAIGVSLAGVVIVLIEKQHRAKLKEQNM.

12 helical membrane passes run 5 to 25 (IFVL…VIPV), 42 to 62 (LLVA…GTLA), 69 to 89 (LIIC…AVGH), 99 to 119 (VIGG…IADI), 129 to 149 (FGYM…IGGF), 157 to 177 (MPFY…IVLI), 201 to 221 (WKVF…LSAF), 239 to 259 (DISI…IYFF), 269 to 289 (LTFI…LVFA), 293 to 313 (WSIM…RPAI), 331 to 351 (LNST…GALF), and 355 to 375 (IEAP…IVLI).

The protein belongs to the major facilitator superfamily. TCR/Tet family.

The protein localises to the cell membrane. Involved in quinolone resistance. May constitute a membrane-associated active efflux pump of hydrophilic quinolones. The chain is Quinolone resistance protein NorA (norA) from Staphylococcus aureus (strain Mu50 / ATCC 700699).